Here is a 580-residue protein sequence, read N- to C-terminus: uncharacterized protein (580 aa).

Positions 300-525 (PGYTATFLET…LRVLVELGYD (226 aa)) constitute a PE-PPE domain.

The protein belongs to the mycobacterial PPE family.

This is an uncharacterized protein from Mycobacterium tuberculosis (strain CDC 1551 / Oshkosh).